The sequence spans 646 residues: Lipoteichoic acid synthase (646 aa).

At 1-7 (MSSQKKK) the chain is on the cytoplasmic side. The helical transmembrane segment at 8–28 (ISLFAFFLLTVITITLKTYFS) threads the bilayer. Residues 29–43 (YYVDFSLGVKGLVQN) are Extracellular-facing. A helical membrane pass occupies residues 44–64 (LILLMNPYSLVALVLSVFLFF). The Cytoplasmic segment spans residues 65 to 68 (KGKK). A helical transmembrane segment spans residues 69–89 (AFWFMFIGGFLLTFLLYANVV). Topologically, residues 90-119 (YFRFFSDFLTFSTLNQVGNVESMGGAVSAS) are extracellular. Residues 120–140 (FKWYDFVYFIDTLVYLFILIF) traverse the membrane as a helical segment. Residues 141–153 (KTKWLDTKAFSKK) are Cytoplasmic-facing. A helical transmembrane segment spans residues 154 to 174 (FVPVVMAASVALFFLNLAFAE). The Extracellular segment spans residues 175–646 (TDRPELLTRT…ETGPKANSKK (472 aa)). Residues E255 and T300 each coordinate Mn(2+). T300 is an active-site residue. Residue H416 participates in substrate binding. Mn(2+) is bound by residues D475 and H476. Basic and acidic residues predominate over residues 623–638 (NPDFKKVNPSKYKYET). Residues 623–646 (NPDFKKVNPSKYKYETGPKANSKK) are disordered.

It belongs to the LTA synthase family. Post-translationally, proteolytically cleaved.

It localises to the cell membrane. Its subcellular location is the secreted. The protein operates within cell wall biogenesis; lipoteichoic acid biosynthesis. Functionally, catalyzes the polymerization of lipoteichoic acid (LTA) polyglycerol phosphate, a reaction that presumably uses phosphatidylglycerol (PG) as substrate. Is required for staphylococcal growth and cell division process. The protein is Lipoteichoic acid synthase (ltaS) of Staphylococcus aureus (strain USA300).